A 669-amino-acid polypeptide reads, in one-letter code: MTSDLFSLHAPFRPTGDQPTAIASLIESLQGEHKFQTLLGATGTGKTFTMASVIAELGRPTLVLAHNKTLAAQLCNELRQFFPENAVEYFISYYDYYQPEAYIPVTDTYIEKTASINDEIDMLRHSATRSLFERRDVIVVASISCIYGLGIPSQYLKAAVPLQVGAEYDPRLVIRDLVNVQYSRNDVELQRGRFRLKGDVLEIVPAYEDRVIRIEFFGDEVEALRLIDPVSGEILQSLDRISIYPARHFVTPEETLEKACQQIQTEMEQQVAFLEKNNLLVEAQRLSQRTRYDLEMLREVGYCNGVENYSRYLADRQAGEPPECLVDYFPEDWLLVIDESHVTIPQLRGMYNGDQARKKVLIDHGFRLPSAADNRPLKAEEFWQKVKQCVFVSATPGVWEIEQSEARVIEQVIRPTGVLDPEIFVRPTTGQVDDLYGEIQTRVKLKERVLITTLTKRMAEDLTDYFSERGIKVQYLHSEIQSIQRIEILQALRDGEFDVLIGVNLLREGLDLPEVSLVAIMDADKEGFLRAERSLIQTIGRAARHIRGQAILYADNFTDSMQKAIAETERRRKIQQEYNEKHGITPQPINKRANNAILQFLDISRRLNSQQLEEVYEQAQDLPLEKIPDLIQQLEEKMQEAAKKQEFEVAAIYRDRIQHLRDRLLGHKK.

Residues Glu-27–Arg-414 enclose the Helicase ATP-binding domain. Gly-40–Thr-47 provides a ligand contact to ATP. The Beta-hairpin signature appears at Tyr-93 to Ile-116. In terms of domain architecture, Helicase C-terminal spans Gln-431–Ile-597. In terms of domain architecture, UVR spans Pro-628–Arg-663.

Belongs to the UvrB family. As to quaternary structure, forms a heterotetramer with UvrA during the search for lesions. Interacts with UvrC in an incision complex.

The protein resides in the cytoplasm. Its function is as follows. The UvrABC repair system catalyzes the recognition and processing of DNA lesions. A damage recognition complex composed of 2 UvrA and 2 UvrB subunits scans DNA for abnormalities. Upon binding of the UvrA(2)B(2) complex to a putative damaged site, the DNA wraps around one UvrB monomer. DNA wrap is dependent on ATP binding by UvrB and probably causes local melting of the DNA helix, facilitating insertion of UvrB beta-hairpin between the DNA strands. Then UvrB probes one DNA strand for the presence of a lesion. If a lesion is found the UvrA subunits dissociate and the UvrB-DNA preincision complex is formed. This complex is subsequently bound by UvrC and the second UvrB is released. If no lesion is found, the DNA wraps around the other UvrB subunit that will check the other stand for damage. This Synechocystis sp. (strain ATCC 27184 / PCC 6803 / Kazusa) protein is UvrABC system protein B.